Consider the following 369-residue polypeptide: tRNA/tmRNA (uracil-C(5))-methyltransferase (369 aa).

S-adenosyl-L-methionine is bound by residues Gln-192, Tyr-221, Asn-226, Glu-242, and Asp-302. The active-site Nucleophile is the Cys-327. The Proton acceptor role is filled by Glu-361.

It belongs to the class I-like SAM-binding methyltransferase superfamily. RNA M5U methyltransferase family. TrmA subfamily.

It carries out the reaction uridine(54) in tRNA + S-adenosyl-L-methionine = 5-methyluridine(54) in tRNA + S-adenosyl-L-homocysteine + H(+). The catalysed reaction is uridine(341) in tmRNA + S-adenosyl-L-methionine = 5-methyluridine(341) in tmRNA + S-adenosyl-L-homocysteine + H(+). In terms of biological role, dual-specificity methyltransferase that catalyzes the formation of 5-methyluridine at position 54 (m5U54) in all tRNAs, and that of position 341 (m5U341) in tmRNA (transfer-mRNA). This Haemophilus ducreyi (strain 35000HP / ATCC 700724) protein is tRNA/tmRNA (uracil-C(5))-methyltransferase.